A 414-amino-acid polypeptide reads, in one-letter code: Probable elongation factor 1-gamma 1 (414 aa).

The 82-residue stretch at 1–82 (MALVLHTYKG…YVSRLNGDNS (82 aa)) folds into the GST N-terminal domain. One can recognise a GST C-terminal domain in the interval 87–215 (SLIEYAQIEQ…VKQTEAVPPI (129 aa)). Low complexity predominate over residues 214-224 (PIASKKAAQPA). The tract at residues 214-260 (PIASKKAAQPAKPKEEPKKKEAPVAEAPKLAEEEEAPKPKAKNPLDL) is disordered. A compositionally biased stretch (basic and acidic residues) spans 225 to 236 (KPKEEPKKKEAP). In terms of domain architecture, EF-1-gamma C-terminal spans 254–414 (AKNPLDLLPP…EALLDAKCFK (161 aa)).

As to quaternary structure, EF-1 is composed of four subunits: alpha, beta, delta, and gamma.

Functionally, probably plays a role in anchoring the complex to other cellular components. The chain is Probable elongation factor 1-gamma 1 from Arabidopsis thaliana (Mouse-ear cress).